The chain runs to 468 residues: FAD-linked oxidoreductase hasG (468 aa).

The 175-residue stretch at 37–211 (LGKIPAAVVQ…VEATFRAYPW (175 aa)) folds into the FAD-binding PCMH-type domain.

This sequence belongs to the oxygen-dependent FAD-linked oxidoreductase family. It depends on FAD as a cofactor.

It participates in secondary metabolite biosynthesis. Its function is as follows. FAD-linked oxidoreductase; part of the gene cluster that mediates the biosynthesis of hexadehydro-astechrome (HAS), a tryptophan-derived iron(III)-complex that acts as a virulence factor in infected mice. Within the pathway, hasG converts the prenyl to a methylbutadienyl side chain. The HAS biosynthesis begins with the synthesis of a tethered Trp-Ala dipeptide by the NRPS hasD. The 7-dimethylallyltryptophan synthase hasE then catalyzes the prenylation of the hasD-tethered tryptophan or the resulting tethered Trp-Ala dipeptide at the C-7 position of the indole moiety. HAS biosynthesis continues via tethered intermediates with the succesive actions of the cytochrome P450 monooxygenase hasH, the O-methyltransferase hasC, and the FAD-linked oxidoreductase hasG. The resulting O-methylated diketopiperazine is then released from hasD. Finally, three O-methylated diketopiperazine molecules assemble in a trimeric complex with Fe(III) to produce hexadehydro-astechrome. The sequence is that of FAD-linked oxidoreductase hasG from Aspergillus fumigatus (strain CBS 144.89 / FGSC A1163 / CEA10) (Neosartorya fumigata).